We begin with the raw amino-acid sequence, 234 residues long: Large ribosomal subunit protein uL1 (234 aa).

The protein belongs to the universal ribosomal protein uL1 family. Part of the 50S ribosomal subunit.

Its function is as follows. Binds directly to 23S rRNA. The L1 stalk is quite mobile in the ribosome, and is involved in E site tRNA release. Functionally, protein L1 is also a translational repressor protein, it controls the translation of the L11 operon by binding to its mRNA. This chain is Large ribosomal subunit protein uL1, found in Cronobacter sakazakii (strain ATCC BAA-894) (Enterobacter sakazakii).